We begin with the raw amino-acid sequence, 211 residues long: Pyridoxine/pyridoxamine 5'-phosphate oxidase (211 aa).

Residues 8 to 11 (RRDY) and Lys-66 each bind substrate. FMN contacts are provided by residues 61–66 (RLVLLK), 76–77 (FT), Arg-82, Lys-83, and Gln-105. Substrate is bound by residues Tyr-123, Arg-127, and Ser-131. FMN-binding positions include 140–141 (QS) and Trp-184. 190–192 (RLH) contacts substrate. Arg-194 is an FMN binding site.

This sequence belongs to the pyridoxamine 5'-phosphate oxidase family. As to quaternary structure, homodimer. The cofactor is FMN.

The catalysed reaction is pyridoxamine 5'-phosphate + O2 + H2O = pyridoxal 5'-phosphate + H2O2 + NH4(+). It carries out the reaction pyridoxine 5'-phosphate + O2 = pyridoxal 5'-phosphate + H2O2. It functions in the pathway cofactor metabolism; pyridoxal 5'-phosphate salvage; pyridoxal 5'-phosphate from pyridoxamine 5'-phosphate: step 1/1. It participates in cofactor metabolism; pyridoxal 5'-phosphate salvage; pyridoxal 5'-phosphate from pyridoxine 5'-phosphate: step 1/1. In terms of biological role, catalyzes the oxidation of either pyridoxine 5'-phosphate (PNP) or pyridoxamine 5'-phosphate (PMP) into pyridoxal 5'-phosphate (PLP). The protein is Pyridoxine/pyridoxamine 5'-phosphate oxidase of Thermosynechococcus vestitus (strain NIES-2133 / IAM M-273 / BP-1).